The following is a 213-amino-acid chain: Guanylate kinase (213 aa).

A Guanylate kinase-like domain is found at 6–186 (GLLIILSSPS…TEERLKTIVS (181 aa)). ATP is bound at residue 13 to 20 (SPSGAGKS).

The protein belongs to the guanylate kinase family.

Its subcellular location is the cytoplasm. It carries out the reaction GMP + ATP = GDP + ADP. Functionally, essential for recycling GMP and indirectly, cGMP. The sequence is that of Guanylate kinase from Ruegeria pomeroyi (strain ATCC 700808 / DSM 15171 / DSS-3) (Silicibacter pomeroyi).